Here is a 94-residue protein sequence, read N- to C-terminus: Small ubiquitin-related modifier 3 (94 aa).

Residue Lys-11 forms a Glycyl lysine isopeptide (Lys-Gly) (interchain with G-Cter in SUMO) linkage. The 78-residue stretch at 15 to 92 folds into the Ubiquitin-like domain; it reads DHINLKVAGQ…IDVFQQQTGG (78 aa). Gly-92 is covalently cross-linked (Glycyl lysine isopeptide (Gly-Lys) (interchain with K-? in acceptor proteins)). Positions 93–94 are excised as a propeptide; that stretch reads VC.

This sequence belongs to the ubiquitin family. SUMO subfamily. In terms of assembly, interacts with sae2 and ube2i. Covalently attached to a number of proteins. Post-translationally, polymeric chains can be formed through Lys-11 cross-linking. Cleavage of precursor form by a sentrin-specific protease is necessary for function.

The protein resides in the cytoplasm. It is found in the nucleus. It localises to the PML body. Ubiquitin-like protein which can be covalently attached to target lysines either as a monomer or as a lysine-linked polymer. Does not seem to be involved in protein degradation and may function as an antagonist of ubiquitin in the degradation process. Plays a role in a number of cellular processes such as nuclear transport, DNA replication and repair, mitosis and signal transduction. Covalent attachment to its substrates requires prior activation by the E1 complex sae1-sae2 and linkage to the E2 enzyme ube2i. This chain is Small ubiquitin-related modifier 3 (sumo3), found in Xenopus laevis (African clawed frog).